We begin with the raw amino-acid sequence, 572 residues long: Probable cysteine--tRNA ligase, mitochondrial (572 aa).

C81 is a Zn(2+) binding site. An L-cysteine-binding site is contributed by G82. The short motif at 83–93 (PTVYDHAHLGH) is the 'HIGH' region element. T122 lines the L-cysteine pocket. The short motif at 127–130 (KIIK) is the 'KIIK' region element. Zn(2+)-binding residues include C260, H285, and E289. H285 provides a ligand contact to L-cysteine. The 'KMSKS' region motif lies at 320–324 (KMSKS). An ATP-binding site is contributed by K323.

This sequence belongs to the class-I aminoacyl-tRNA synthetase family. Requires Zn(2+) as cofactor.

The protein localises to the mitochondrion. It carries out the reaction tRNA(Cys) + L-cysteine + ATP = L-cysteinyl-tRNA(Cys) + AMP + diphosphate. It catalyses the reaction 2 L-cysteine = S-sulfanyl-L-cysteine + L-alanine. The catalysed reaction is S-sulfanyl-L-cysteine + L-cysteine = S-disulfanyl-L-cysteine + L-alanine. The enzyme catalyses S-sulfanyl-L-cysteine + tRNA(Cys) + ATP = (S)-sulfanyl-L-cysteinyl-tRNA(Cys) + AMP + diphosphate. It carries out the reaction S-disulfanyl-L-cysteine + tRNA(Cys) + ATP = (S)-disulfanyl-L-cysteinyl-tRNA(Cys) + AMP + diphosphate. Mitochondrial cysteine-specific aminoacyl-tRNA synthetase that catalyzes the ATP-dependent ligation of cysteine to tRNA(Cys). Its function is as follows. In addition to its role as an aminoacyl-tRNA synthetase, has also cysteine persulfide synthase activity. Produces reactive persulfide species such as cysteine persulfide (CysSSH) from substrate cysteine and mediate direct incorporation of CysSSH into proteins during translations, resulting in protein persulfides and polysulfides. CysSSHs behave as potent antioxidants and cellular protectants. This is Probable cysteine--tRNA ligase, mitochondrial (cars2) from Xenopus tropicalis (Western clawed frog).